Reading from the N-terminus, the 29-residue chain is uncharacterized protein (29 aa).

A helical transmembrane segment spans residues 8-28 (FALIVVLFILLIIVGTAFVGG).

Belongs to the SscA family.

The protein localises to the membrane. This is an uncharacterized protein from Bacillus subtilis (strain 168).